Reading from the N-terminus, the 195-residue chain is Large ribosomal subunit protein bL17 (195 aa).

Residues 132-195 (ARGTRFAARK…TEAKDTKPES (64 aa)) are disordered. Low complexity predominate over residues 159–186 (PTAAAVAAEAQAEQPTAEAVAADDAATT).

Belongs to the bacterial ribosomal protein bL17 family. Part of the 50S ribosomal subunit. Contacts protein L32.

The polypeptide is Large ribosomal subunit protein bL17 (Parafrankia sp. (strain EAN1pec)).